The following is a 453-amino-acid chain: Membrane-bound acylglycerophosphatidylinositol O-acyltransferase mboa-7 (453 aa).

Transmembrane regions (helical) follow at residues 4–24, 36–56, 79–99, 154–174, 195–215, 220–240, and 244–264; these read ILGL…FSFG, ILAS…PKIV, LYVF…HYIL, AYFY…QMLI, VRLL…PLDI, AIWE…FVVF, and VYSA…GIYP. Asn319 carries N-linked (GlcNAc...) asparagine glycosylation. The active site involves His350. Transmembrane regions (helical) follow at residues 354–374 and 421–441; these read AGYF…DVIF and FWSS…IYSA.

The protein belongs to the membrane-bound acyltransferase family. Expressed ubiquitously throughout development from early embryo to larval and adult stages. In adults, strongly expressed in pharyngeal muscle, body wall muscle, vulval cells, distal tip cells, intestinal cells and spermatheca.

The protein localises to the membrane. The catalysed reaction is 1-octadecanoyl-sn-glycero-3-phospho-(1D-myo-inositol) + (5Z,8Z,11Z,14Z,17Z)-eicosapentaenoyl-CoA = 1-octadecanoyl-2-(5Z,8Z,11Z,14Z,17Z-eicosapentaenoyl)-sn-glycero-3-phospho-(1D-myo-inositol) + CoA. It carries out the reaction a 1-acyl-sn-glycero-3-phospho-(1D-myo-inositol) + (5Z,8Z,11Z,14Z,17Z)-eicosapentaenoyl-CoA = a 1-acyl-2-(5Z,8Z,11Z,14Z,17Z-eicosapentaenoyl)-sn-glycero-3-phospho-(1D-myo-inositol) + CoA. The enzyme catalyses a 1-acyl-sn-glycero-3-phospho-(1D-myo-inositol) + (5Z,8Z,11Z,14Z)-eicosatetraenoyl-CoA = a 1-acyl-2-(5Z,8Z,11Z,14Z-eicosatetraenoyl)-sn-glycero-3-phospho-(1D-myo-inositol) + CoA. It functions in the pathway lipid metabolism; phospholipid metabolism. Acyltransferase which mediates the conversion of lysophosphatidylinositol (1-acyl-sn-glycero-3-phosphatidylinositol or LPI) into phosphatidylinositol (1,2-diacyl-sn-glycero-3-phosphoinositol or PI) (LPIAT activity). Prefers sn-2-LPI rather than sn-1-LPI as the acyl acceptor. Lysophospholipid acyltransferases (LPLATs) catalyze the reacylation step of the phospholipid remodeling pathway also known as the Lands cycle. Involved in the selective incorporation of arachidonoyl-CoA ((5Z,8Z,11Z,14Z)-eicosatetraenoyl-CoA) and (5Z,8Z,11Z,14Z,17Z)-eicosapentaenoyl-CoA (EPA-CoA) into PI. Besides its role in biomembranes, PI is a precursor of PI 3-phosphate (PIP3) and its fatty acid composition has an important role in PI3P signaling. This Caenorhabditis elegans protein is Membrane-bound acylglycerophosphatidylinositol O-acyltransferase mboa-7.